Consider the following 209-residue polypeptide: Heat shock protein beta-1 (209 aa).

R12 is subject to Omega-N-methylarginine. S13 bears the Phosphoserine mark. S15 is subject to Phosphoserine; by MAPKAPK2 and MAPKAPK3. S27 carries the phosphoserine modification. Residues A74–K209 form an interaction with TGFB1I1 region. In terms of domain architecture, sHSP spans A80–T188. 2 positions are modified to phosphoserine; by MAPKAPK2, MAPKAPK3 and MAPKAPK5: S82 and S86. Phosphoserine occurs at positions 87, 90, and 102. At K127 the chain carries N6-acetyllysine. Residue T178 is modified to Phosphothreonine. S180 and S203 each carry phosphoserine.

Belongs to the small heat shock protein (HSP20) family. As to quaternary structure, homooligomer. Homodimer; becomes monomeric upon activation. Heterooligomer; with HSPB6. Associates with alpha- and beta-tubulin. Interacts with TGFB1I1. Interacts with CRYAB. Interacts with HSPB8. Interacts with HSPBAP1. Post-translationally, phosphorylated upon exposure to protein kinase C activators and heat shock. Phosphorylation by MAPKAPK2 and MAPKAPK3 in response to stress dissociates HSPB1 from large small heat-shock protein (sHsps) oligomers and impairs its chaperone activity and ability to protect against oxidative stress effectively. Phosphorylation by MAPKAPK5 in response to PKA stimulation induces F-actin rearrangement.

It is found in the cytoplasm. Its subcellular location is the nucleus. It localises to the cytoskeleton. The protein resides in the spindle. Functionally, small heat shock protein which functions as a molecular chaperone probably maintaining denatured proteins in a folding-competent state. Plays a role in stress resistance and actin organization. Through its molecular chaperone activity may regulate numerous biological processes including the phosphorylation and the axonal transport of neurofilament proteins. The sequence is that of Heat shock protein beta-1 (HSPB1) from Canis lupus familiaris (Dog).